A 196-amino-acid polypeptide reads, in one-letter code: Superoxide dismutase [Fe] (196 aa).

Residues His20, His68, Asp157, and His161 each contribute to the Fe cation site.

This sequence belongs to the iron/manganese superoxide dismutase family. Homotetramer. Fe cation is required as a cofactor.

The enzyme catalyses 2 superoxide + 2 H(+) = H2O2 + O2. In terms of biological role, destroys superoxide anion radicals which are normally produced within the cells and which are toxic to biological systems. This Tetrahymena pyriformis protein is Superoxide dismutase [Fe].